A 929-amino-acid polypeptide reads, in one-letter code: Isoleucine--tRNA ligase (929 aa).

Positions P58–H68 match the 'HIGH' region motif. E563 lines the L-isoleucyl-5'-AMP pocket. Residues K605 to S609 carry the 'KMSKS' region motif. K608 contributes to the ATP binding site. 4 residues coordinate Zn(2+): C892, C895, C912, and C915.

It belongs to the class-I aminoacyl-tRNA synthetase family. IleS type 1 subfamily. Monomer. Zn(2+) serves as cofactor.

The protein resides in the cytoplasm. It catalyses the reaction tRNA(Ile) + L-isoleucine + ATP = L-isoleucyl-tRNA(Ile) + AMP + diphosphate. Catalyzes the attachment of isoleucine to tRNA(Ile). As IleRS can inadvertently accommodate and process structurally similar amino acids such as valine, to avoid such errors it has two additional distinct tRNA(Ile)-dependent editing activities. One activity is designated as 'pretransfer' editing and involves the hydrolysis of activated Val-AMP. The other activity is designated 'posttransfer' editing and involves deacylation of mischarged Val-tRNA(Ile). The sequence is that of Isoleucine--tRNA ligase from Neisseria gonorrhoeae (strain ATCC 700825 / FA 1090).